Here is a 601-residue protein sequence, read N- to C-terminus: Proteasome-associated ATPase (601 aa).

Residues 1–15 (MSGPRSGSGSGGSTG) show a composition bias toward gly residues. The segment at 1–31 (MSGPRSGSGSGGSTGRPGDAESRRSAYEKEA) is disordered. Over residues 18 to 31 (GDAESRRSAYEKEA) the composition is skewed to basic and acidic residues. Residues 18–106 (GDAESRRSAY…LKEEVDRLAQ (89 aa)) are a coiled coil. 289–294 (GCGKTL) is a binding site for ATP. Positions 600–601 (YL) are docks into pockets in the proteasome alpha-ring.

It belongs to the AAA ATPase family. In terms of assembly, homohexamer. Assembles into a hexameric ring structure that caps the 20S proteasome core. Strongly interacts with the prokaryotic ubiquitin-like protein Pup through a hydrophobic interface; the interacting region of ARC lies in its N-terminal coiled-coil domain. There is one Pup binding site per ARC hexamer ring. Upon ATP-binding, the C-terminus of ARC interacts with the alpha-rings of the proteasome core, possibly by binding to the intersubunit pockets.

It participates in protein degradation; proteasomal Pup-dependent pathway. Its function is as follows. ATPase which is responsible for recognizing, binding, unfolding and translocation of pupylated proteins into the bacterial 20S proteasome core particle. May be essential for opening the gate of the 20S proteasome via an interaction with its C-terminus, thereby allowing substrate entry and access to the site of proteolysis. Thus, the C-termini of the proteasomal ATPase may function like a 'key in a lock' to induce gate opening and therefore regulate proteolysis. The chain is Proteasome-associated ATPase from Frankia alni (strain DSM 45986 / CECT 9034 / ACN14a).